A 146-amino-acid polypeptide reads, in one-letter code: Large ribosomal subunit protein uL15 (146 aa).

Positions 1–18 (MKLHELKPTPGSRHERNR) are enriched in basic and acidic residues. Residues 1–69 (MKLHELKPTP…RLPKRGFNNP (69 aa)) are disordered. The segment covering 42 to 52 (SGGGVRPGFEG) has biased composition (gly residues).

It belongs to the universal ribosomal protein uL15 family. Part of the 50S ribosomal subunit.

Functionally, binds to the 23S rRNA. This chain is Large ribosomal subunit protein uL15, found in Exiguobacterium sp. (strain ATCC BAA-1283 / AT1b).